Here is a 578-residue protein sequence, read N- to C-terminus: MDTGCLSSMNITGTSQARSFAGQLPTHRCFASSSIQALKSSQHVSFGVKSLVLRNKGKRFRRRLGALQVVCQDFPRPPLENTINFLEAGQLSSFFRNSEQPTKPLQVVIAGAGLAGLSTAKYLADAGHKPILLEARDVLGGKIAAWKDEDGDWYETGLHIFFGAYPNIQNLFGELGINDRLQWKEHSMIFAMPNKPGEFSRFDFPETLPAPLNGIWAILRNNEMLTWPEKVKFALGLLPAMVGGQAYVEAQDGFTVSEWMKKQGVPDRVNDEVFIAMSKALNFINPDELSMQCILIALNRFLQEKHGSKMAFLDGNPPERLCMPIVDHVRSLGGEVRLNSRIQKIELNPDGTVKHFALTDGTQITGDAYVFATPVDILKLLVPQEWKEISYFKKLEKLVGVPVINVHIWFDRKLKNTYDHLLFSRSSLLSVYADMSVTCKEYYDPNRSMLELVFAPAEEWVGRSDTEIIEATMQELAKLFPDEIAADQSKAKILKYHVVKTPRSVYKTIPDCEPCRPLQRSPIEGFYLAGDYTKQKYLASMEGAVLSGKLCAQSVVEDYKMLSRRSLKSLQSEVPVAS.

A chloroplast and chromoplast-targeting transit peptide spans 1–87; sequence MDTGCLSSMN…PLENTINFLE (87 aa). Residues Ala115, 134-135, Lys142, 159-160, and Tyr165 each bind FAD; these read EA and HI. Residue Arg300 participates in substrate binding. FAD is bound by residues Ile342 and Asp531. Ala539 contacts substrate. An FAD-binding site is contributed by Met541.

This sequence belongs to the carotenoid/retinoid oxidoreductase family. In terms of assembly, homotetramer. Homotetramer is the active form of the enzyme. The cofactor is FAD.

The protein resides in the plastid. It localises to the chloroplast. The protein localises to the chromoplast. It is found in the membrane. It catalyses the reaction 2 a plastoquinone + 15-cis-phytoene = 9,9',15-tri-cis-zeta-carotene + 2 a plastoquinol. It functions in the pathway carotenoid biosynthesis; lycopene biosynthesis. With respect to regulation, inhibited by the herbicide norflurazon (NFZ). In terms of biological role, converts phytoene into zeta-carotene via the intermediary of phytofluene by the symmetrical introduction of two double bonds at the C-11 and C-11' positions of phytoene with a concomitant isomerization of two neighboring double bonds at the C9 and C9' positions from trans to cis. Active with decylplastoquinone (DPQ) as substrate. Also active with other benzoquinones, which are strongly preferred over naphthoquinones as substrates. The chain is 15-cis-phytoene desaturase, chloroplastic/chromoplastic (PDS1) from Oryza sativa subsp. indica (Rice).